Here is a 1122-residue protein sequence, read N- to C-terminus: Histone deacetylase 5 (1122 aa).

Residues methionine 1–arginine 22 are disordered. A Glycyl lysine isopeptide (Lys-Gly) (interchain with G-Cter in SUMO2) cross-link involves residue lysine 35. The segment at lysine 196–leucine 281 is disordered. A compositionally biased stretch (basic and acidic residues) spans aspartate 247–alanine 258. Serine 259 is modified (phosphoserine; by AMPK, CaMK1, SIK1 and PKD/PRKD1). Over residues lysine 272–leucine 281 the composition is skewed to basic and acidic residues. The residue at position 292 (threonine 292) is a Phosphothreonine; by PKC. 2 disordered regions span residues glycine 302–threonine 343 and methionine 481–serine 504. Low complexity predominate over residues asparagine 312 to serine 327. Residues threonine 328–asparagine 340 are compositionally biased toward polar residues. A compositionally biased stretch (low complexity) spans serine 494–serine 504. Position 498 is a phosphoserine; by AMPK, CaMK1, SIK1 and PKD/PRKD1 (serine 498). Position 533 is an N6-acetyllysine (lysine 533). A disordered region spans residues threonine 536–glycine 625. Positions serine 581–glutamate 621 are enriched in acidic residues. Phosphoserine occurs at positions 611 and 661. Residues glycine 684–glutamine 1028 form a histone deacetylase region. 4 residues coordinate Zn(2+): cysteine 696, cysteine 698, histidine 704, and cysteine 781. Residue histidine 833 is part of the active site. Residues glutamate 1081–leucine 1122 carry the Nuclear export signal motif. Positions glutamate 1097–leucine 1122 are disordered. Residues alanine 1104 to glutamate 1113 are compositionally biased toward basic and acidic residues. At serine 1108 the chain carries Phosphoserine.

It belongs to the histone deacetylase family. HD type 2 subfamily. As to quaternary structure, interacts with AHRR, BAHD1, BCOR, HDAC7, HDAC9, CTBP1, MEF2C, NCOR2, NRIP1, PHB2 and a 14-3-3 chaperone protein. Interacts with BCL6, DDIT3/CHOP, GRK5, KDM5B and MYOCD. Interacts with EP300 in the presence of TFAP2C. Interacts with ANKRA2. Interacts with CUL7 (as part of the 3M complex); negatively regulated by ANKRA2. Interacts with ZBTB7B; the interaction allows the recruitment of HDAC4 on CD8 loci for deacetylation and possible inhibition of CD8 genes expression. Interacts with RARA. In terms of processing, phosphorylated by AMPK, CaMK1, SIK1 and PRKD1 at Ser-259 and Ser-498. The phosphorylation is required for the export to the cytoplasm and inhibition. Phosphorylated by the PKC kinases PKN1 and PKN2, impairing nuclear import. Phosphorylated by GRK5, leading to nuclear export of HDAC5 and allowing MEF2-mediated transcription. Ubiquitinated. Polyubiquitination however does not lead to its degradation.

It localises to the nucleus. The protein resides in the cytoplasm. The catalysed reaction is N(6)-acetyl-L-lysyl-[histone] + H2O = L-lysyl-[histone] + acetate. In terms of biological role, responsible for the deacetylation of lysine residues on the N-terminal part of the core histones (H2A, H2B, H3 and H4). Histone deacetylation gives a tag for epigenetic repression and plays an important role in transcriptional regulation, cell cycle progression and developmental events. Histone deacetylases act via the formation of large multiprotein complexes. Involved in muscle maturation by repressing transcription of myocyte enhancer MEF2C. During muscle differentiation, it shuttles into the cytoplasm, allowing the expression of myocyte enhancer factors. Serves as a corepressor of RARA and causes its deacetylation. In association with RARA, plays a role in the repression of microRNA-10a and thereby in the inflammatory response. The sequence is that of Histone deacetylase 5 (HDAC5) from Pongo abelii (Sumatran orangutan).